Consider the following 354-residue polypeptide: 4-hydroxy-2-oxovalerate aldolase 5 (354 aa).

The Pyruvate carboxyltransferase domain maps to 11–263; it reads VTVHDMCLRD…ETGCDLFKLM (253 aa). 19–20 contributes to the substrate binding site; it reads RD. Mn(2+) is bound at residue aspartate 20. Residue histidine 23 is the Proton acceptor of the active site. The substrate site is built by serine 173 and histidine 202. Mn(2+) is bound by residues histidine 202 and histidine 204. Tyrosine 293 provides a ligand contact to substrate.

It belongs to the 4-hydroxy-2-oxovalerate aldolase family.

It carries out the reaction (S)-4-hydroxy-2-oxopentanoate = acetaldehyde + pyruvate. In Dechloromonas aromatica (strain RCB), this protein is 4-hydroxy-2-oxovalerate aldolase 5.